The sequence spans 73 residues: Nodulin-1 (73 aa).

The signal sequence occupies residues 1 to 23 (MERKTLASLCFFLIVLLAAQVVA). Intrachain disulfides connect Cys39–Cys64, Cys49–Cys71, and Cys53–Cys73.

Expressed in nodules, but not in leaves, stems, flowers and roots. In developing nodules, expressed close to the infection threads.

It is found in the secreted. Its function is as follows. Nodulation-related protein probably involved in the infection process. The polypeptide is Nodulin-1 (N1) (Medicago truncatula (Barrel medic)).